A 144-amino-acid polypeptide reads, in one-letter code: Large ribosomal subunit protein uL11 (144 aa).

This sequence belongs to the universal ribosomal protein uL11 family. Part of the ribosomal stalk of the 50S ribosomal subunit. Interacts with L10 and the large rRNA to form the base of the stalk. L10 forms an elongated spine to which L12 dimers bind in a sequential fashion forming a multimeric L10(L12)X complex. In terms of processing, one or more lysine residues are methylated.

In terms of biological role, forms part of the ribosomal stalk which helps the ribosome interact with GTP-bound translation factors. In Neisseria meningitidis serogroup B (strain ATCC BAA-335 / MC58), this protein is Large ribosomal subunit protein uL11.